We begin with the raw amino-acid sequence, 111 residues long: MEAKAITRFVRLSPRKARLVADLVRGKSALEALDILEFTNKKAARVIKKTLSSAIANATNNFKMDEDKLVVSTIMVNQGPVLKRVMPRAMGRADIIRKPTAHITVAVSDEQ.

It belongs to the universal ribosomal protein uL22 family. As to quaternary structure, part of the 50S ribosomal subunit.

Its function is as follows. This protein binds specifically to 23S rRNA; its binding is stimulated by other ribosomal proteins, e.g. L4, L17, and L20. It is important during the early stages of 50S assembly. It makes multiple contacts with different domains of the 23S rRNA in the assembled 50S subunit and ribosome. In terms of biological role, the globular domain of the protein is located near the polypeptide exit tunnel on the outside of the subunit, while an extended beta-hairpin is found that lines the wall of the exit tunnel in the center of the 70S ribosome. This is Large ribosomal subunit protein uL22 from Fusobacterium nucleatum subsp. nucleatum (strain ATCC 25586 / DSM 15643 / BCRC 10681 / CIP 101130 / JCM 8532 / KCTC 2640 / LMG 13131 / VPI 4355).